Here is a 76-residue protein sequence, read N- to C-terminus: Dermaseptin-H1 (76 aa).

Residues Met-1 to Cys-22 form the signal peptide. The propeptide occupies Glu-23–Arg-45. The segment at Glu-25–Lys-44 is disordered. The span at Glu-30–Ser-41 shows a compositional bias: acidic residues. Gln-73 bears the Glutamine amide mark. The propeptide occupies Glu-75–Gln-76.

As to expression, expressed by the skin glands.

The protein resides in the secreted. Has antimicrobial activity. The sequence is that of Dermaseptin-H1 from Pithecopus hypochondrialis (Orange-legged leaf frog).